Reading from the N-terminus, the 177-residue chain is Translation initiation factor IF-3 (177 aa).

The protein belongs to the IF-3 family. In terms of assembly, monomer.

It localises to the cytoplasm. Its function is as follows. IF-3 binds to the 30S ribosomal subunit and shifts the equilibrium between 70S ribosomes and their 50S and 30S subunits in favor of the free subunits, thus enhancing the availability of 30S subunits on which protein synthesis initiation begins. The polypeptide is Translation initiation factor IF-3 (Elusimicrobium minutum (strain Pei191)).